The primary structure comprises 556 residues: Arginine--tRNA ligase (556 aa).

The 'HIGH' region signature appears at 132 to 142 (ANPTGNLHLGH).

This sequence belongs to the class-I aminoacyl-tRNA synthetase family. As to quaternary structure, monomer.

The protein localises to the cytoplasm. It carries out the reaction tRNA(Arg) + L-arginine + ATP = L-arginyl-tRNA(Arg) + AMP + diphosphate. The sequence is that of Arginine--tRNA ligase from Bacillus licheniformis (strain ATCC 14580 / DSM 13 / JCM 2505 / CCUG 7422 / NBRC 12200 / NCIMB 9375 / NCTC 10341 / NRRL NRS-1264 / Gibson 46).